The primary structure comprises 672 residues: Methionine--tRNA ligase (672 aa).

A 'HIGH' region motif is present at residues 12–22 (AYTNGPLHLGH). 4 residues coordinate Zn(2+): Cys144, Cys147, Cys156, and Cys159. Residues 330 to 334 (KMSTS) carry the 'KMSKS' region motif. ATP is bound at residue Thr333. The 100-residue stretch at 573-672 (DFAKIELKVA…KDLPVGSTIC (100 aa)) folds into the tRNA-binding domain.

Belongs to the class-I aminoacyl-tRNA synthetase family. MetG type 1 subfamily. Homodimer. The cofactor is Zn(2+).

The protein resides in the cytoplasm. The catalysed reaction is tRNA(Met) + L-methionine + ATP = L-methionyl-tRNA(Met) + AMP + diphosphate. Functionally, is required not only for elongation of protein synthesis but also for the initiation of all mRNA translation through initiator tRNA(fMet) aminoacylation. The sequence is that of Methionine--tRNA ligase from Methanococcus aeolicus (strain ATCC BAA-1280 / DSM 17508 / OCM 812 / Nankai-3).